A 288-amino-acid chain; its full sequence is Putative aryl-alcohol dehydrogenase AAD10 (288 aa).

The protein belongs to the aldo/keto reductase family. Aldo/keto reductase 2 subfamily.

This chain is Putative aryl-alcohol dehydrogenase AAD10 (AAD10), found in Saccharomyces cerevisiae (strain ATCC 204508 / S288c) (Baker's yeast).